The primary structure comprises 182 residues: Fucoxanthin-chlorophyll a-c binding protein D, chloroplastic (182 aa).

Residues 1–4 (AMKM) constitute a chloroplast transit peptide. Helical transmembrane passes span 46-66 (IAML…PGML), 87-107 (IPPG…LAVM), and 148-168 (GRAA…NNKP).

It belongs to the fucoxanthin chlorophyll protein family. The LHC complex of chromophytic algae is composed of fucoxanthin, chlorophyll A and C bound non-covalently by fucoxanthin chlorophyll proteins (FCPs). The ratio of pigments in this LHC is; fucoxanthin: chlorophyll C: chlorophyll A; (0.6-1): (0.1-0.3): (1).

The protein localises to the plastid. It localises to the chloroplast thylakoid membrane. In terms of biological role, the light-harvesting complex (LHC) functions as a light receptor, it captures and delivers excitation energy to photosystems with which it is closely associated. Energy is transferred from the carotenoid and chlorophyll C (or B) to chlorophyll A and the photosynthetic reaction centers where it is used to synthesize ATP and reducing power. This Macrocystis pyrifera (Giant kelp) protein is Fucoxanthin-chlorophyll a-c binding protein D, chloroplastic (FCPD).